A 307-amino-acid polypeptide reads, in one-letter code: tRNA dimethylallyltransferase (307 aa).

An ATP-binding site is contributed by 10–17 (GPTAVGKT). 12–17 (TAVGKT) contributes to the substrate binding site. The interaction with substrate tRNA stretch occupies residues 35–38 (DSMQ).

It belongs to the IPP transferase family. As to quaternary structure, monomer. Mg(2+) is required as a cofactor.

The enzyme catalyses adenosine(37) in tRNA + dimethylallyl diphosphate = N(6)-dimethylallyladenosine(37) in tRNA + diphosphate. In terms of biological role, catalyzes the transfer of a dimethylallyl group onto the adenine at position 37 in tRNAs that read codons beginning with uridine, leading to the formation of N6-(dimethylallyl)adenosine (i(6)A). The chain is tRNA dimethylallyltransferase from Ligilactobacillus salivarius (strain UCC118) (Lactobacillus salivarius).